Consider the following 360-residue polypeptide: MSSSNSRVHEEQPPTENRRYARPTAQMNRVIEQQPRRRDYFQNNDNSGRRGYNRHENNGNAQDVVRSHYNARPDLGYKKRQFSPIIQLKRFNNWIKSVLIQKFAPHASDYPILVLDMGCGKGGDLIKWDKAGIDGYIGIDIAEVSVNQAKKRYREMHASFDALFYAGDCFSSSINELLPPDQRKFDVVSLQFCMHYAFESEEKVRVLLGNVSKCLPRGGVMIGTIPNSDVIVKHIKMLKPGEKEWGNDIYKVRFPESPPRSFRPPYGIQYYFYLEDAVTDVPEYVVPFEAFRAVAEGYNLELIWVKPFLDILNEEKNSETYGPLMDRMKVVDNEGHRGIGGQEKEAAGFYLAFAFEKRGI.

A disordered region spans residues 1–62 (MSSSNSRVHE…NRHENNGNAQ (62 aa)). Positions 7 to 19 (RVHEEQPPTENRR) are enriched in basic and acidic residues. Positions 83 to 358 (SPIIQLKRFN…FYLAFAFEKR (276 aa)) constitute an mRNA cap 0 methyltransferase domain. Position 92–93 (92–93 (NN)) interacts with mRNA. 6 residues coordinate S-adenosyl-L-methionine: Lys-96, Gly-118, Asp-140, Asp-168, Gln-191, and Tyr-196.

Belongs to the class I-like SAM-binding methyltransferase superfamily. mRNA cap 0 methyltransferase family. Interacts with cdk9.

The protein resides in the nucleus. It carries out the reaction a 5'-end (5'-triphosphoguanosine)-ribonucleoside in mRNA + S-adenosyl-L-methionine = a 5'-end (N(7)-methyl 5'-triphosphoguanosine)-ribonucleoside in mRNA + S-adenosyl-L-homocysteine. Its function is as follows. Responsible for methylating the 5'-cap structure of mRNAs. This is mRNA cap guanine-N(7) methyltransferase (pcm1) from Schizosaccharomyces pombe (strain 972 / ATCC 24843) (Fission yeast).